A 311-amino-acid polypeptide reads, in one-letter code: MTALSPIPVFDAADTAALLAYPALLATLGQAVADYAAGEIVSPERLVVPLQAGGVMLSMPSSARDLATHKLVNVCPGNGARGLPTILGQVTAYDASTGEMRFALDGPTVTGRRTAAVTALGIQALHGAAPRDILLIGTGKQAANHAEALAAIFPEARLHVRGTSADSAAAFCAAHRAQAPRLVPLDGDAIPDAIDVVVTLTTSRTPVYREAAREGRLVVGVGAFTADAAEIDANTVRASRLVVDDPAGARHEAGDLIVAQVDWQHVASLADVLGGTFDRSGPLLFKSVGCAAWDLAACRTARDALAARRAG.

Belongs to the ornithine cyclodeaminase/mu-crystallin family. In terms of assembly, homodimer.

It carries out the reaction L-pipecolate + NAD(+) = Delta(1)-piperideine-2-carboxylate + NADH + H(+). It catalyses the reaction L-pipecolate + NADP(+) = Delta(1)-piperideine-2-carboxylate + NADPH + H(+). The catalysed reaction is L-proline + NAD(+) = 1-pyrroline-2-carboxylate + NADH + H(+). The enzyme catalyses L-proline + NADP(+) = 1-pyrroline-2-carboxylate + NADPH + H(+). It functions in the pathway amino-acid degradation. Functionally, catalyzes the reduction of both Delta(1)-pyrroline-2-carboxylate (Pyr2C) and Delta(1)-piperideine-2-carboxylate (Pip2C) to L-proline and L-pipecolate, respectively, using NADPH or NADH as the electron donor. Can also catalyze the reverse oxidation reactions, albeit at a much lower rate. Together with LhpH, is involved in a trans-3-hydroxy-L-proline (t3LHyp) degradation pathway to L-proline, which allows A.brasilense to grow on t3LHyp as a sole carbon source. Also appears to be involved in D-proline and D-lysine metabolism. Does not show ornithine cyclodeaminase (OCD) activity. This Azospirillum brasilense protein is Delta(1)-pyrroline-2-carboxylate/Delta(1)-piperideine-2-carboxylate reductase.